Consider the following 335-residue polypeptide: Biotin synthase (335 aa).

Positions Tyr-51–Arg-281 constitute a Radical SAM core domain. Positions 66, 70, and 73 each coordinate [4Fe-4S] cluster. [2Fe-2S] cluster-binding residues include Cys-112, Cys-144, Cys-204, and Arg-276.

This sequence belongs to the radical SAM superfamily. Biotin synthase family. Homodimer. [4Fe-4S] cluster is required as a cofactor. [2Fe-2S] cluster serves as cofactor.

The catalysed reaction is (4R,5S)-dethiobiotin + (sulfur carrier)-SH + 2 reduced [2Fe-2S]-[ferredoxin] + 2 S-adenosyl-L-methionine = (sulfur carrier)-H + biotin + 2 5'-deoxyadenosine + 2 L-methionine + 2 oxidized [2Fe-2S]-[ferredoxin]. Its pathway is cofactor biosynthesis; biotin biosynthesis; biotin from 7,8-diaminononanoate: step 2/2. Functionally, catalyzes the conversion of dethiobiotin (DTB) to biotin by the insertion of a sulfur atom into dethiobiotin via a radical-based mechanism. The sequence is that of Biotin synthase from Prochlorococcus marinus (strain MIT 9303).